A 718-amino-acid chain; its full sequence is MELDVESTSITQLRSHCETCFPLMEEVVPRRERYVDLLEFSNFNGIPYPVVDPSRKPRRFLADFRYSWSIPLIHHYPNVEKDVLSSKRVHRVISKLKEQNDEQKNRAVQFFTEISARLSKFICKCCSYVLYKVFRRLMDKLLVCKEEMEVLYEAEQTGIPMVYLPLHRSHLDYLLITWCNWHFGLKLPHIASGDNLNLSGLGWLLRATGAFFIRRRVDPDDERGKDQLYRAILHSYIEQVLSKDMPIEFFLEGTRSRFGKALTPKNGLISNVVEAVQHGFIKDCYLVPVSYTYDAVVEGIFLHELMGIPKVRESVLGVFRGIFSGFSKSKQCGVVRMHYGRPIRLTEYLATITASLSSNHRTRPVRMTKLSTSFSYRELVPWHRTHSETVDDRTMIRAIGFHVVYEAQMMCSISPVAVVSCLLLAKWRGKVSRSTFERDCEWLCEKIIAEGGDVVGYQSKKTKGSALVKYAFEKLESCVEVTDEYVSPKESHSSFITLAYNKNSVICRFSIKSVIALTIVSRPSGTKLSIDQIVEDALSLCDWLQFEFMFCRPCDSLRELVHNVLGQKEWSDPIHGFLRSEIEDDGFLDAGGALNSGTLRVRDAKSRETLQFFANLVRPFVQSLYLISSFVVSEKCPTEPTSDNNIIRQLCQQSLAGDIDLPFAPLLESINSDSFKNALRVLKDKGLLQRSTPNSTARSGNSRLAELISNLERVLEVK.

The HXXXXD motif signature appears at 167-172 (HRSHLD). Residues 409-425 (MMCSISPVAVVSCLLLA) traverse the membrane as a helical segment.

The protein belongs to the GPAT/DAPAT family.

The protein localises to the mitochondrion membrane. The enzyme catalyses sn-glycerol 3-phosphate + an acyl-CoA = a 1-acyl-sn-glycero-3-phosphate + CoA. Its pathway is phospholipid metabolism; CDP-diacylglycerol biosynthesis; CDP-diacylglycerol from sn-glycerol 3-phosphate: step 1/3. The polypeptide is Probable glycerol-3-phosphate acyltransferase, mitochondrial (acl-6) (Caenorhabditis elegans).